The following is a 107-amino-acid chain: Large ribosomal subunit protein P2-A (107 aa).

Residues 85–107 (GAAAPAAAAEEEEDDDMGFGLFD) are disordered.

Belongs to the eukaryotic ribosomal protein P1/P2 family. In terms of assembly, P1 and P2 exist as dimers at the large ribosomal subunit. In terms of processing, phosphorylated.

Its function is as follows. Plays an important role in the elongation step of protein synthesis. The polypeptide is Large ribosomal subunit protein P2-A (Trypanosoma cruzi).